The primary structure comprises 299 residues: Putative activator of 90 kDa heat shock protein ATPase homolog 2 (299 aa).

It belongs to the AHA1 family.

Functionally, co-chaperone that stimulates HSP90 ATPase activity. In Homo sapiens (Human), this protein is Putative activator of 90 kDa heat shock protein ATPase homolog 2.